Here is a 466-residue protein sequence, read N- to C-terminus: Ribulose bisphosphate carboxylase large chain (466 aa).

N6,N6,N6-trimethyllysine is present on Lys5. Substrate-binding residues include Asn114 and Thr164. Lys166 acts as the Proton acceptor in catalysis. Lys168 is a substrate binding site. Mg(2+) is bound by residues Lys192, Asp194, and Glu195. Position 192 is an N6-carboxylysine (Lys192). His285 serves as the catalytic Proton acceptor. 3 residues coordinate substrate: Arg286, His318, and Ser370.

It belongs to the RuBisCO large chain family. Type I subfamily. Heterohexadecamer of 8 large chains and 8 small chains; disulfide-linked. The disulfide link is formed within the large subunit homodimers. Requires Mg(2+) as cofactor. In terms of processing, the disulfide bond which can form in the large chain dimeric partners within the hexadecamer appears to be associated with oxidative stress and protein turnover.

Its subcellular location is the plastid. It localises to the chloroplast. The enzyme catalyses 2 (2R)-3-phosphoglycerate + 2 H(+) = D-ribulose 1,5-bisphosphate + CO2 + H2O. It catalyses the reaction D-ribulose 1,5-bisphosphate + O2 = 2-phosphoglycolate + (2R)-3-phosphoglycerate + 2 H(+). Functionally, ruBisCO catalyzes two reactions: the carboxylation of D-ribulose 1,5-bisphosphate, the primary event in carbon dioxide fixation, as well as the oxidative fragmentation of the pentose substrate in the photorespiration process. Both reactions occur simultaneously and in competition at the same active site. The protein is Ribulose bisphosphate carboxylase large chain of Oxalis dillenii (Gray-green wood sorrel).